Consider the following 702-residue polypeptide: K(+)-insensitive pyrophosphate-energized proton pump (702 aa).

4 helical membrane-spanning segments follow: residues 3 to 23 (GIYL…ALTI), 63 to 83 (AVVF…GFLI), 130 to 150 (MLVA…LVGI), and 162 to 182 (VALG…GGIF). K184 is a substrate binding site. The Mg(2+) site is built by D187, D191, N214, and D217. Helical transmembrane passes span 234 to 254 (AVTV…VPAM), 255 to 275 (TSMM…SILG), 294 to 314 (GFLV…AIVP), 329 to 349 (GFDL…LIWV), 379 to 399 (GLAI…AAII), and 407 to 427 (LFGI…VVAL). Mg(2+) is bound at residue D435. 4 helical membrane passes run 466-486 (AVTK…LFAA), 517-537 (YVVV…SMGM), 586-606 (IIPS…ILGI), and 612-632 (AFSA…FVAI). Ca(2+) contacts are provided by D642, D668, and D672. K675 is a substrate binding site.

It belongs to the H(+)-translocating pyrophosphatase (TC 3.A.10) family. K(+)-insensitive subfamily. Homodimer. The cofactor is Mg(2+).

The protein localises to the cell inner membrane. It catalyses the reaction diphosphate + H2O + H(+)(in) = 2 phosphate + 2 H(+)(out). Its function is as follows. Proton pump that utilizes the energy of pyrophosphate hydrolysis as the driving force for proton movement across the membrane. Generates a proton motive force. The polypeptide is K(+)-insensitive pyrophosphate-energized proton pump (Rhodospirillum rubrum (strain ATCC 11170 / ATH 1.1.1 / DSM 467 / LMG 4362 / NCIMB 8255 / S1)).